Consider the following 430-residue polypeptide: Hydrogenobyrinate a,c-diamide synthase (430 aa).

One can recognise a GATase cobBQ-type domain in the interval 239–422 (RIGVARDAAF…IHFYLPSDPL (184 aa)). Cys321 serves as the catalytic Nucleophile.

It belongs to the CobB/CbiA family. Mg(2+) serves as cofactor.

It carries out the reaction hydrogenobyrinate + 2 L-glutamine + 2 ATP + 2 H2O = hydrogenobyrinate a,c-diamide + 2 L-glutamate + 2 ADP + 2 phosphate + 2 H(+). It functions in the pathway cofactor biosynthesis; adenosylcobalamin biosynthesis; cob(II)yrinate a,c-diamide from precorrin-2 (aerobic route): step 9/10. In terms of biological role, catalyzes the ATP-dependent amidation of the two carboxylate groups at positions a and c of hydrogenobyrinate, using either L-glutamine or ammonia as the nitrogen source. In Stutzerimonas stutzeri (strain A1501) (Pseudomonas stutzeri), this protein is Hydrogenobyrinate a,c-diamide synthase.